A 434-amino-acid polypeptide reads, in one-letter code: MPNRRGSRNAYYFFVQEKIPELRRRGLPVARVADAIPYCSADWALLREEEKEKYSEMAREWKAAQGKDAGPWEKQKPVSTPLRRPAMLVPKQNVSPPDMSCLSLKSDQALLGGIFYFLNIFSHGELPPHCEQRFLPCEIGCVKYSLQEGIMADFHSFINPGEIPRGFRFHCQAASDSSHKIPISHFESGHDQATVLQNLYRFIRPNSGKWPPIYCKSDDRARVNWCLKYMAKSSEITQDLELVTVEDLVVGIYQQKFLKEPSKTWVRSLLDVAMWDYSSNTRCKWHEENDILFCALAVCRKIAYCISNSLATLLGIQLTEAHVPLQDYETSNSVTPKMVVLDAGRYQKLRVESSGFSHFSSSNQEQRSNTPTGDYPSGVKISGQSSSVRGRGITRLLESISNSSSNIHKFSTCESSLSPYMSQKDGYKSFSSLS.

The HMG box DNA-binding region spans 4–73 (RRGSRNAYYF…AQGKDAGPWE (70 aa)). A disordered region spans residues 357 to 387 (SHFSSSNQEQRSNTPTGDYPSGVKISGQSSS). Residues 363-372 (NQEQRSNTPT) show a composition bias toward polar residues.

It belongs to the maelstrom family. Interacts with SMARCB1, SIN3B and DDX4. Interacts with piRNA-associated proteins TDRD1, PIWIL1 and PIWIL2. Interacts with TEX19.

It localises to the cytoplasm. The protein localises to the nucleus. Plays a central role during spermatogenesis by repressing transposable elements and preventing their mobilization, which is essential for the germline integrity. Acts via the piRNA metabolic process, which mediates the repression of transposable elements during meiosis by forming complexes composed of piRNAs and Piwi proteins and governs the methylation and subsequent repression of transposons. Its association with piP-bodies suggests a participation in the secondary piRNAs metabolic process. Required for the localization of germ-cell factors to the meiotic nuage. The chain is Protein maelstrom homolog (MAEL) from Sus scrofa (Pig).